We begin with the raw amino-acid sequence, 402 residues long: MGEDISKIVIIGAGQAGATVAFGLRRNGFAGEITLVGEESHLPYERPQLSKEMLRPEASAHKSIKTRADYEEQSILLELGCKVVRADAQAHSIVLDDGRQLAFDRLVIATGVQPRRLSSAFQGAHRVHYLRTLEDAARLRADLEAGKSLAIVGGGVIGLEVAAAARALNCPVTLIEAADRLMSRSVDEVVSAYLDRAHRRNGVDIRYGVAATELLDDGRLRLSDGGTVPAEAVLVGIGVTPNIEGFEHLDITDATGVRVDAYSQTVVPGIFATGDIASQPNGGGFGRIETWANAQDHALNLVKNLMGEAVPYEAPVWFWSDQGPINLQVVGDAANGRRIVRGDEHGDVFSVFRLDANQQVIGCATVNSPKDMAVARRWVKQRSSVDPQRLADPTIPLRDCAV.

FAD contacts are provided by Ala16, Lys51, Val83, Arg131, and Asp275.

This sequence belongs to the FAD-dependent oxidoreductase family. The p-cumate 2,3-dioxygenase multicomponent enzyme system is composed of an electron transfer component and a dioxygenase component (iron sulfur protein (ISP)). The electron transfer component is composed of a ferredoxin reductase (CmtAa) and a ferredoxin (CmtAd), and the dioxygenase component is formed of a large alpha subunit (CmtAb) and a small beta subunit (CmtAc). FAD is required as a cofactor.

The enzyme catalyses 2 reduced [2Fe-2S]-[ferredoxin] + NAD(+) + H(+) = 2 oxidized [2Fe-2S]-[ferredoxin] + NADH. Its pathway is aromatic compound metabolism; p-cumate degradation; acetaldehyde and pyruvate from p-cumate. Component of the p-cumate 2,3-dioxygenase multicomponent enzyme system which catalyzes the incorporation of both atoms of molecular oxygen into p-cumate to form cis-2,3-dihydroxy-2,3-dihydro-p-cumate. Ferredoxin reductase catalyzes the transfer of electrons from NADH to ferredoxin (CmtAd). The chain is p-cumate 2,3-dioxygenase system, ferredoxin--NAD(+) reductase component from Pseudomonas putida (Arthrobacter siderocapsulatus).